Here is a 148-residue protein sequence, read N- to C-terminus: uncharacterized protein (148 aa).

Positions 38-99 are disordered; it reads QFRRHHHAEH…RRHLRKGHLK (62 aa). Over residues 64 to 82 the composition is skewed to basic and acidic residues; sequence FHHDGGRHGHATRIHENNR. The span at 83-99 shows a compositional bias: basic residues; the sequence is RPHKRNRRRHLRKGHLK.

This is an uncharacterized protein from Fowl adenovirus A serotype 1 (strain CELO / Phelps) (FAdV-1).